Consider the following 347-residue polypeptide: Ribosomal RNA small subunit methyltransferase C (347 aa).

The protein belongs to the methyltransferase superfamily. RsmC family. Monomer.

The protein localises to the cytoplasm. The enzyme catalyses guanosine(1207) in 16S rRNA + S-adenosyl-L-methionine = N(2)-methylguanosine(1207) in 16S rRNA + S-adenosyl-L-homocysteine + H(+). In terms of biological role, specifically methylates the guanine in position 1207 of 16S rRNA in the 30S particle. This is Ribosomal RNA small subunit methyltransferase C from Shewanella putrefaciens (strain CN-32 / ATCC BAA-453).